Here is a 168-residue protein sequence, read N- to C-terminus: Mediator of RNA polymerase II transcription subunit 7b (168 aa).

Over residues 1 to 12 (MATATYPPPPPY) the composition is skewed to pro residues. The tract at residues 1–33 (MATATYPPPPPYYRLYKDFSENTDSAPEPPPPI) is disordered. Coiled coils occupy residues 64–92 (KDSNLDYKKELRSLNRELQLHILELADVL) and 132–162 (IMELQIQQRKQAVEDIKRRREEAQGLLKDAF).

Belongs to the Mediator complex subunit 7 family. As to quaternary structure, component of the Mediator complex. Interacts with MEE14/CBP1.

Its subcellular location is the nucleus. Functionally, component of the Mediator complex, a coactivator involved in the regulated transcription of nearly all RNA polymerase II-dependent genes. Mediator functions as a bridge to convey information from gene-specific regulatory proteins to the basal RNA polymerase II transcription machinery. The Mediator complex, having a compact conformation in its free form, is recruited to promoters by direct interactions with regulatory proteins and serves for the assembly of a functional pre-initiation complex with RNA polymerase II and the general transcription factors. This Arabidopsis thaliana (Mouse-ear cress) protein is Mediator of RNA polymerase II transcription subunit 7b (MED7B).